We begin with the raw amino-acid sequence, 282 residues long: tRNA (guanine-N(7)-)-methyltransferase (282 aa).

A disordered region spans residues methionine 1–aspartate 31. A compositionally biased stretch (basic and acidic residues) spans alanine 16 to aspartate 31. Residues glycine 99, glutamate 122–isoleucine 123, asparagine 157–alanine 158, and cysteine 177 contribute to the S-adenosyl-L-methionine site. The active site involves aspartate 180. S-adenosyl-L-methionine is bound at residue threonine 255 to glutamate 257.

The protein belongs to the class I-like SAM-binding methyltransferase superfamily. TrmB family. In terms of assembly, forms a complex with TRM82.

It localises to the nucleus. It carries out the reaction guanosine(46) in tRNA + S-adenosyl-L-methionine = N(7)-methylguanosine(46) in tRNA + S-adenosyl-L-homocysteine. Its pathway is tRNA modification; N(7)-methylguanine-tRNA biosynthesis. Catalyzes the formation of N(7)-methylguanine at position 46 (m7G46) in tRNA. In Eremothecium gossypii (strain ATCC 10895 / CBS 109.51 / FGSC 9923 / NRRL Y-1056) (Yeast), this protein is tRNA (guanine-N(7)-)-methyltransferase.